Here is a 129-residue protein sequence, read N- to C-terminus: MRHRKSGRHLSRTSAHRKAMFQNMAVSLFEHELIKTTLPKAKELRRVAEPLITLAKEDSVANRRLAFDRTRSKAAVGKLFNDLGKRYANRPGGYLRILKCGFRAGDNAPMAYVELVDRPVGGEVVEAAE.

The protein belongs to the bacterial ribosomal protein bL17 family. Part of the 50S ribosomal subunit. Contacts protein L32.

The protein is Large ribosomal subunit protein bL17 of Pseudomonas aeruginosa (strain UCBPP-PA14).